The chain runs to 180 residues: Guanosine-3',5'-bis(diphosphate) 3'-pyrophosphohydrolase MESH1 (180 aa).

The 96-residue stretch at 33-128 (YINHPIGVAR…VKLADKLYNL (96 aa)) folds into the HD domain. The Mn(2+) site is built by His36, His62, and Asp63. Catalysis depends on nucleophile residues Glu66 and Asp67. A Mn(2+)-binding site is contributed by Asp123.

The protein belongs to the MESH1 family. It depends on Mn(2+) as a cofactor.

The catalysed reaction is guanosine 3',5'-bis(diphosphate) + H2O = GDP + diphosphate + H(+). PpGpp hydrolyzing enzyme involved in starvation response. This chain is Guanosine-3',5'-bis(diphosphate) 3'-pyrophosphohydrolase MESH1 (hddc3), found in Danio rerio (Zebrafish).